Reading from the N-terminus, the 377-residue chain is Carboxynorspermidine/carboxyspermidine decarboxylase (377 aa).

Position 41 is an N6-(pyridoxal phosphate)lysine (Lys-41). Positions 238 and 274 each coordinate substrate.

Belongs to the Orn/Lys/Arg decarboxylase class-II family. NspC subfamily. In terms of assembly, homodimer. Pyridoxal 5'-phosphate serves as cofactor.

The protein localises to the cytoplasm. It catalyses the reaction carboxynorspermidine + H(+) = norspermidine + CO2. It carries out the reaction carboxyspermidine + H(+) = spermidine + CO2. Dithiothreitol greatly stimulates activity, maximum stimulation being at 5-20 mM dithiothreitol concentration. Fe(3+), Fe(2+) and Mn(2+) severely inhibit activity (88%, 82% and 50%, respectively), whereas Zn(2+) has a slightly inhibitory effect (23%) and Mg(2+), Ca(2+), Cu(2+) and Cu(+) have no effect. Catalyzes the decarboxylation of carboxynorspermidine and carboxyspermidine. 2,3-diaminopropionic acid, 2,4-diaminobutyric acid, L-ornithine or L-lysine cannot serve as substrates. This chain is Carboxynorspermidine/carboxyspermidine decarboxylase, found in Vibrio alginolyticus.